Here is a 266-residue protein sequence, read N- to C-terminus: MSGPILVFDSGVGGLSILDEIRRVLPDQNYCYLFDNARLPYGELEEQELIDGCEALITATVAQLGASLVVIACNTASTLVLPVLREALTIPVVGVVPAIKPAALYSQAKHIGLLATPGTIKRSYTHSLIQEFAANCQVELYGSSELVLLAERKASGKQILQGEIAQLLSPIKVSGIDTLVLGCTHFPILKDEIQQYLGDGVLLLDSGKAVAARVSTLIKEESTLNKRQRKGHSKEMIALYTSEVGEGLKKLLAEFGFSTYSKAQTG.

Residues 9 to 10 (DS) and 41 to 42 (YG) contribute to the substrate site. Cys-73 acts as the Proton donor/acceptor in catalysis. 74 to 75 (NT) provides a ligand contact to substrate. Cys-183 (proton donor/acceptor) is an active-site residue. 184 to 185 (TH) contributes to the substrate binding site.

The protein belongs to the aspartate/glutamate racemases family.

The catalysed reaction is L-glutamate = D-glutamate. It participates in cell wall biogenesis; peptidoglycan biosynthesis. Functionally, provides the (R)-glutamate required for cell wall biosynthesis. This is Glutamate racemase from Shewanella woodyi (strain ATCC 51908 / MS32).